The primary structure comprises 428 residues: Type II methyltransferase M.BanI (428 aa).

The SAM-dependent MTase C5-type domain occupies 3-417 (IKFVDLFAGI…EDLFQNNVNE (415 aa)). The active site involves cysteine 76.

The protein belongs to the class I-like SAM-binding methyltransferase superfamily. C5-methyltransferase family. As to quaternary structure, monomer.

It catalyses the reaction a 2'-deoxycytidine in DNA + S-adenosyl-L-methionine = a 5-methyl-2'-deoxycytidine in DNA + S-adenosyl-L-homocysteine + H(+). Its function is as follows. A methylase, recognizes the double-stranded sequence 5'-GGYRCC-3', methylates C-4 on both strands, and protects the DNA from cleavage by the BanI endonuclease. This Aneurinibacillus aneurinilyticus (Bacillus aneurinolyticus) protein is Type II methyltransferase M.BanI (banIM).